Consider the following 250-residue polypeptide: Hydroxyethylthiazole kinase (250 aa).

Met39 contributes to the substrate binding site. Positions 114 and 159 each coordinate ATP. Gly186 is a substrate binding site.

It belongs to the Thz kinase family. Requires Mg(2+) as cofactor.

The catalysed reaction is 5-(2-hydroxyethyl)-4-methylthiazole + ATP = 4-methyl-5-(2-phosphooxyethyl)-thiazole + ADP + H(+). Its pathway is cofactor biosynthesis; thiamine diphosphate biosynthesis; 4-methyl-5-(2-phosphoethyl)-thiazole from 5-(2-hydroxyethyl)-4-methylthiazole: step 1/1. Catalyzes the phosphorylation of the hydroxyl group of 4-methyl-5-beta-hydroxyethylthiazole (THZ). The polypeptide is Hydroxyethylthiazole kinase (Lactococcus lactis subsp. cremoris (strain SK11)).